The following is a 106-amino-acid chain: Small ribosomal subunit protein uS17 (106 aa).

The protein belongs to the universal ribosomal protein uS17 family. Part of the 30S ribosomal subunit.

Its function is as follows. One of the primary rRNA binding proteins, it binds specifically to the 5'-end of 16S ribosomal RNA. The sequence is that of Small ribosomal subunit protein uS17 from Picrophilus torridus (strain ATCC 700027 / DSM 9790 / JCM 10055 / NBRC 100828 / KAW 2/3).